The sequence spans 224 residues: MAIVDWPAHERPREKLLAHGPAALSDAELLAIFLRVGVPGKSAVDLARELLAHFGSLARLCHASQQEFSSINGMGPAKYAQLHALLEVARRALKEDFTQGQTFESAQSVKDFLRLTLGHRPHEVFACFFLDVRHRLIAWEELFRGTLTEARVYPREIAKRALHHNAAAVILAHNHPTGNTEPSESDVILTRELCRALAMLDVIVLDHMIVGRNHVYGFLEHGKM.

The MPN domain occupies 102-224 (TFESAQSVKD…VYGFLEHGKM (123 aa)). Residues histidine 173, histidine 175, and aspartate 186 each contribute to the Zn(2+) site. Residues 173 to 186 (HNHPTGNTEPSESD) carry the JAMM motif motif.

It belongs to the UPF0758 family.

In Ralstonia pickettii (strain 12J), this protein is UPF0758 protein Rpic_2712.